The following is a 570-amino-acid chain: Auxin efflux carrier component 6 (570 aa).

The Extracellular segment spans residues 1 to 6 (MITGNE). A helical membrane pass occupies residues 7-27 (FYTVMCAMAPLYFAMFVAYGS). At 28–38 (VKWCKIFTPAQ) the chain is on the cytoplasmic side. Residues 39–59 (CSGINRFVSVFAVPVLSFHFI) traverse the membrane as a helical segment. Val51 is a (indol-3-yl)acetate binding site. Over 60 to 70 (SQNNPYKMDTM) the chain is Extracellular. Residues 71–91 (FILADTLSKIFVFVLLSLWAV) traverse the membrane as a helical segment. Residues 92–100 (FFKAGGLDW) are Cytoplasmic-facing. The helical transmembrane segment at 101-121 (LITLFSIATLPNTLVMGIPLL) threads the bilayer. Residues Asn112 and Leu114 each contribute to the (indol-3-yl)acetate site. Topologically, residues 122-131 (QAMYGDYTQT) are extracellular. Residues 132-152 (LMVQLVVLQCIIWYTLLLFLF) form a helical membrane-spanning segment. Tyr145 lines the (indol-3-yl)acetate pocket. The Cytoplasmic segment spans residues 153-430 (ELRAARLLIR…LSRNPNTYSS (278 aa)). 2 positions are modified to phosphoserine: Ser230 and Ser308. The helical transmembrane segment at 431–451 (LLGLVWSLISFKWNIPMPNIV) threads the bilayer. The Extracellular portion of the chain corresponds to 452 to 454 (DFS). A helical transmembrane segment spans residues 455–475 (IKIISDAGLGMAMFSLGLFMA). The Cytoplasmic segment spans residues 476 to 491 (LQPKMIPCGAKKATMG). The chain crosses the membrane as a helical span at residues 492–512 (MLIRFISGPLFMAGASLLVGL). The Extracellular portion of the chain corresponds to 513-515 (RGS). Residues 516–536 (RLHAAIVQAALPQGIVPFVFA) traverse the membrane as a helical segment. Positions 530 and 531 each coordinate (indol-3-yl)acetate. Over 537–549 (REYNLHPDLLSTL) the chain is Cytoplasmic. Residues 550–570 (VIFGMIVSLPVTILYYVLLGL) traverse the membrane as a helical segment.

This sequence belongs to the auxin efflux carrier (TC 2.A.69.1) family. As to quaternary structure, homodimer. As to expression, expressed in the vasculature of the primary root, cotyledons, floral stem, sepals and the main transmitting tract of the reproductive silique. Expressed in embryos, shoot meristem, root tip and lateral root meristems. Expressed in the nectaries and the floral organ boundaries of the anthers. Detected in pollen. Expressed in broad subepidermal domains that narrowed to sites of vein formation. Expressed in veins of mature leaves.

The protein resides in the endoplasmic reticulum membrane. Its function is as follows. Component of the intracellular auxin-transport pathway. Regulates auxin transport and auxin homeostasis. Directly involved in the regulation of nectar production. Involved in unfolded protein response (UPR) activation. Involved in the control of vein patterning. Redundantly with PIN8, inhibits the vein-formation-promoting functions of PIN5. PIN5, PIN6, and PIN8 control vein network geometry, but they are expressed in mutually exclusive domains of leaf vascular cells. The chain is Auxin efflux carrier component 6 from Arabidopsis thaliana (Mouse-ear cress).